The sequence spans 165 residues: Putative pre-16S rRNA nuclease (165 aa).

It belongs to the YqgF nuclease family.

Its subcellular location is the cytoplasm. In terms of biological role, could be a nuclease involved in processing of the 5'-end of pre-16S rRNA. This is Putative pre-16S rRNA nuclease from Brucella anthropi (strain ATCC 49188 / DSM 6882 / CCUG 24695 / JCM 21032 / LMG 3331 / NBRC 15819 / NCTC 12168 / Alc 37) (Ochrobactrum anthropi).